We begin with the raw amino-acid sequence, 453 residues long: Bifunctional protein GlmU (453 aa).

The interval 1–225 is pyrophosphorylase; sequence MNIVILAAGT…EWETLGVNSK (225 aa). UDP-N-acetyl-alpha-D-glucosamine-binding positions include 6–9, lysine 20, glutamine 71, 76–77, 98–100, glycine 135, glutamate 150, asparagine 165, and asparagine 223; these read LAAG, GT, and YGD. Aspartate 100 contributes to the Mg(2+) binding site. Mg(2+) is bound at residue asparagine 223. The segment at 226–246 is linker; the sequence is AQLAELERIHQRNLADALLAA. The N-acetyltransferase stretch occupies residues 247–453; it reads GVTLADPARI…GYVRPVKKKS (207 aa). UDP-N-acetyl-alpha-D-glucosamine-binding residues include arginine 329 and lysine 347. The Proton acceptor role is filled by histidine 359. UDP-N-acetyl-alpha-D-glucosamine is bound by residues tyrosine 362 and asparagine 373. Acetyl-CoA is bound by residues alanine 376, 382 to 383, serine 401, and alanine 419; that span reads NY.

The protein in the N-terminal section; belongs to the N-acetylglucosamine-1-phosphate uridyltransferase family. It in the C-terminal section; belongs to the transferase hexapeptide repeat family. As to quaternary structure, homotrimer. Mg(2+) is required as a cofactor.

Its subcellular location is the cytoplasm. The enzyme catalyses alpha-D-glucosamine 1-phosphate + acetyl-CoA = N-acetyl-alpha-D-glucosamine 1-phosphate + CoA + H(+). It catalyses the reaction N-acetyl-alpha-D-glucosamine 1-phosphate + UTP + H(+) = UDP-N-acetyl-alpha-D-glucosamine + diphosphate. It functions in the pathway nucleotide-sugar biosynthesis; UDP-N-acetyl-alpha-D-glucosamine biosynthesis; N-acetyl-alpha-D-glucosamine 1-phosphate from alpha-D-glucosamine 6-phosphate (route II): step 2/2. Its pathway is nucleotide-sugar biosynthesis; UDP-N-acetyl-alpha-D-glucosamine biosynthesis; UDP-N-acetyl-alpha-D-glucosamine from N-acetyl-alpha-D-glucosamine 1-phosphate: step 1/1. The protein operates within bacterial outer membrane biogenesis; LPS lipid A biosynthesis. Functionally, catalyzes the last two sequential reactions in the de novo biosynthetic pathway for UDP-N-acetylglucosamine (UDP-GlcNAc). The C-terminal domain catalyzes the transfer of acetyl group from acetyl coenzyme A to glucosamine-1-phosphate (GlcN-1-P) to produce N-acetylglucosamine-1-phosphate (GlcNAc-1-P), which is converted into UDP-GlcNAc by the transfer of uridine 5-monophosphate (from uridine 5-triphosphate), a reaction catalyzed by the N-terminal domain. The sequence is that of Bifunctional protein GlmU from Burkholderia mallei (strain NCTC 10247).